Consider the following 102-residue polypeptide: MAKQKIRIRLKAYDHRILDQSAEKIVETAKRSGASVSGPIPLPTEKSVYTILRAVHKYKDSREQFEMRTHKRLIDIVNPTPQTVDALMRLDLPSGVDIEIKL.

This sequence belongs to the universal ribosomal protein uS10 family. As to quaternary structure, part of the 30S ribosomal subunit.

Functionally, involved in the binding of tRNA to the ribosomes. The protein is Small ribosomal subunit protein uS10 (rpsJ) of Bacillus subtilis (strain 168).